The following is a 276-amino-acid chain: Formamidopyrimidine-DNA glycosylase (276 aa).

Residue Pro-2 is the Schiff-base intermediate with DNA of the active site. Residue Glu-3 is the Proton donor of the active site. The active-site Proton donor; for beta-elimination activity is Lys-58. The DNA site is built by His-92, Arg-111, and Lys-154. An FPG-type zinc finger spans residues 239 to 273; the sequence is QVYGHAGEECNNCGTILEKIKVNGRGTTFCPHCQV. Arg-263 (proton donor; for delta-elimination activity) is an active-site residue.

The protein belongs to the FPG family. Monomer. It depends on Zn(2+) as a cofactor.

The catalysed reaction is Hydrolysis of DNA containing ring-opened 7-methylguanine residues, releasing 2,6-diamino-4-hydroxy-5-(N-methyl)formamidopyrimidine.. It carries out the reaction 2'-deoxyribonucleotide-(2'-deoxyribose 5'-phosphate)-2'-deoxyribonucleotide-DNA = a 3'-end 2'-deoxyribonucleotide-(2,3-dehydro-2,3-deoxyribose 5'-phosphate)-DNA + a 5'-end 5'-phospho-2'-deoxyribonucleoside-DNA + H(+). Involved in base excision repair of DNA damaged by oxidation or by mutagenic agents. Acts as a DNA glycosylase that recognizes and removes damaged bases. Has a preference for oxidized purines, such as 7,8-dihydro-8-oxoguanine (8-oxoG). Has AP (apurinic/apyrimidinic) lyase activity and introduces nicks in the DNA strand. Cleaves the DNA backbone by beta-delta elimination to generate a single-strand break at the site of the removed base with both 3'- and 5'-phosphates. This is Formamidopyrimidine-DNA glycosylase from Lactobacillus johnsonii (strain CNCM I-12250 / La1 / NCC 533).